We begin with the raw amino-acid sequence, 364 residues long: Thebaine 6-O-demethylase (364 aa).

In terms of domain architecture, Fe2OG dioxygenase spans 214 to 314 (GTQAMRMNYY…RLSIATFHDP (101 aa)). Tyr-223 contacts 2-oxoglutarate. Positions 238, 240, and 295 each coordinate Fe cation. Arg-305 and Ser-307 together coordinate 2-oxoglutarate.

Belongs to the iron/ascorbate-dependent oxidoreductase family. L-ascorbate serves as cofactor. Requires Fe cation as cofactor. As to expression, mainly expressed in stems and leaves and, to a lower extent, in capsules and roots.

It catalyses the reaction thebaine + 2-oxoglutarate + O2 = neopinone + formaldehyde + succinate + CO2. The enzyme catalyses oripavine + 2-oxoglutarate + O2 = neomorphinone + formaldehyde + succinate + CO2. The catalysed reaction is (S)-canadine + S-adenosyl-L-methionine = (S)-cis-N-methylcanadine + S-adenosyl-L-homocysteine. It carries out the reaction thebaine + 2-oxoglutarate + O2 = 6-O-demethylthebaine + formaldehyde + succinate + CO2 + H(+). It participates in alkaloid biosynthesis; morphine biosynthesis. Its activity is regulated as follows. Moderate substrate inhibition. Not inhibited in vitro by acylcyclohexanediones. Its function is as follows. Non-heme dioxygenase involved in biosynthesis of morphinan-type benzylisoquinoline and opiate alkaloids natural products. Mediates the conversion of thebaine to neopinone. Also catalyzes, with lower efficiency, the 6-O-demethylation of oripavine to neomorphinone, which is converted spontaneously to morphinone. Supports dealkylation reactions such as O,O-demethylenation in the metabolism of protopine, benzo[c]phenanthridine, and rhoeadine alkaloids; cleaves a methylenedioxy bridge leaving two hydroxyl groups. Catalyzes the O-demethylation of methylenedioxy bridges on protopine alkaloids such as allocryptopine. No activity with (S)-reticuline, salutaridine, papaverine, (S)-corytuberine, (S)-scoulerine, pavine, noscapine or codeine. This is Thebaine 6-O-demethylase from Papaver somniferum (Opium poppy).